The sequence spans 378 residues: Flagellar P-ring protein 2 (378 aa).

The first 33 residues, Met-1 to Ala-33, serve as a signal peptide directing secretion.

This sequence belongs to the FlgI family. In terms of assembly, the basal body constitutes a major portion of the flagellar organelle and consists of four rings (L,P,S, and M) mounted on a central rod.

It localises to the periplasm. It is found in the bacterial flagellum basal body. In terms of biological role, assembles around the rod to form the L-ring and probably protects the motor/basal body from shearing forces during rotation. The sequence is that of Flagellar P-ring protein 2 from Hahella chejuensis (strain KCTC 2396).